The sequence spans 181 residues: ATP-dependent protease subunit HslV (181 aa).

The active site involves threonine 7. Na(+) is bound by residues glycine 166, cysteine 169, and threonine 172.

It belongs to the peptidase T1B family. HslV subfamily. In terms of assembly, a double ring-shaped homohexamer of HslV is capped on each side by a ring-shaped HslU homohexamer. The assembly of the HslU/HslV complex is dependent on binding of ATP.

Its subcellular location is the cytoplasm. It carries out the reaction ATP-dependent cleavage of peptide bonds with broad specificity.. With respect to regulation, allosterically activated by HslU binding. Protease subunit of a proteasome-like degradation complex believed to be a general protein degrading machinery. The polypeptide is ATP-dependent protease subunit HslV (Variovorax paradoxus (strain S110)).